We begin with the raw amino-acid sequence, 247 residues long: V-type proton ATPase subunit D (247 aa).

This sequence belongs to the V-ATPase D subunit family. As to quaternary structure, V-ATPase is a heteromultimeric enzyme made up of two complexes: the ATP-hydrolytic V1 complex and the proton translocation V0 complex. The V1 complex consists of three catalytic AB heterodimers that form a heterohexamer, three peripheral stalks each consisting of EG heterodimers, one central rotor including subunits D and F, and the regulatory subunits C and H. The proton translocation complex V0 consists of the proton transport subunit a, a ring of proteolipid subunits c9c'', rotary subunit d, subunits e and f, and the accessory subunits ATP6AP1/Ac45 and ATP6AP2/PRR. Interacts with SNX10. Expressed in brain (at protein level). Present in tissues active in secretion. Amounts elevated in brain, kidney and testis.

The protein resides in the membrane. The protein localises to the cytoplasmic vesicle. It localises to the clathrin-coated vesicle membrane. It is found in the cytoplasm. Its subcellular location is the cytoskeleton. The protein resides in the microtubule organizing center. The protein localises to the centrosome. It localises to the cell projection. It is found in the cilium. Functionally, subunit of the V1 complex of vacuolar(H+)-ATPase (V-ATPase), a multisubunit enzyme composed of a peripheral complex (V1) that hydrolyzes ATP and a membrane integral complex (V0) that translocates protons. V-ATPase is responsible for acidifying and maintaining the pH of intracellular compartments and in some cell types, is targeted to the plasma membrane, where it is responsible for acidifying the extracellular environment. May play a role in cilium biogenesis through regulation of the transport and the localization of proteins to the cilium. In Bos taurus (Bovine), this protein is V-type proton ATPase subunit D (ATP6V1D).